A 117-amino-acid polypeptide reads, in one-letter code: Immunoglobulin kappa variable 9-129 (117 aa).

The first 22 residues, 1-22 (MDMRAPAQVFGFLLLWFPGARC), serve as a signal peptide directing secretion. The framework-1 stretch occupies residues 23 to 45 (DIQMTQSPSSLSASLGERVSLTC). C45 and C110 form a disulfide bridge. A complementarity-determining-1 region spans residues 46-56 (RASQDIHGYLN). Residues 57–71 (LFQQKPGETIKHLIY) form a framework-2 region. The complementarity-determining-2 stretch occupies residues 72–78 (ETSNLDS). Residues 79 to 110 (GVPKRFSGSRSGSDYSLIIGSLESEDFADYYC) are framework-3. Positions 111–117 (LQYASSP) are complementarity-determining-3.

The chain is Immunoglobulin kappa variable 9-129 from Mus musculus (Mouse).